A 345-amino-acid chain; its full sequence is N-acetyl-gamma-glutamyl-phosphate reductase (345 aa).

Cys-149 is an active-site residue.

This sequence belongs to the NAGSA dehydrogenase family. Type 1 subfamily.

It localises to the cytoplasm. The catalysed reaction is N-acetyl-L-glutamate 5-semialdehyde + phosphate + NADP(+) = N-acetyl-L-glutamyl 5-phosphate + NADPH + H(+). It functions in the pathway amino-acid biosynthesis; L-arginine biosynthesis; N(2)-acetyl-L-ornithine from L-glutamate: step 3/4. Functionally, catalyzes the NADPH-dependent reduction of N-acetyl-5-glutamyl phosphate to yield N-acetyl-L-glutamate 5-semialdehyde. This is N-acetyl-gamma-glutamyl-phosphate reductase from Geobacillus stearothermophilus (Bacillus stearothermophilus).